The sequence spans 349 residues: Peptide transport system ATP-binding protein SapD (349 aa).

An ABC transporter domain is found at 1–259 (MALLDICNLN…PHHPYTQALI (259 aa)). 40 to 47 (GESGSGKS) is a binding site for ATP.

It belongs to the ABC transporter superfamily.

It localises to the cell inner membrane. Its function is as follows. Involved in a peptide intake transport system that plays a role in the resistance to antimicrobial peptides. The protein is Peptide transport system ATP-binding protein SapD (sapD) of Haemophilus influenzae (strain ATCC 51907 / DSM 11121 / KW20 / Rd).